Here is a 231-residue protein sequence, read N- to C-terminus: Large ribosomal subunit protein uL1 (231 aa).

The protein belongs to the universal ribosomal protein uL1 family. As to quaternary structure, part of the 50S ribosomal subunit.

Functionally, binds directly to 23S rRNA. The L1 stalk is quite mobile in the ribosome, and is involved in E site tRNA release. Protein L1 is also a translational repressor protein, it controls the translation of the L11 operon by binding to its mRNA. This Dechloromonas aromatica (strain RCB) protein is Large ribosomal subunit protein uL1.